Reading from the N-terminus, the 81-residue chain is Photosystem I iron-sulfur center (81 aa).

4Fe-4S ferredoxin-type domains are found at residues 2–31 and 39–68; these read SHTV…MIPW and IASS…VRVY. [4Fe-4S] cluster is bound by residues C11, C14, C17, C21, C48, C51, C54, and C58.

The eukaryotic PSI reaction center is composed of at least 11 subunits. [4Fe-4S] cluster is required as a cofactor.

The protein resides in the plastid. It localises to the chloroplast thylakoid membrane. It catalyses the reaction reduced [plastocyanin] + hnu + oxidized [2Fe-2S]-[ferredoxin] = oxidized [plastocyanin] + reduced [2Fe-2S]-[ferredoxin]. Apoprotein for the two 4Fe-4S centers FA and FB of photosystem I (PSI); essential for photochemical activity. FB is the terminal electron acceptor of PSI, donating electrons to ferredoxin. The C-terminus interacts with PsaA/B/D and helps assemble the protein into the PSI complex. Required for binding of PsaD and PsaE to PSI. PSI is a plastocyanin-ferredoxin oxidoreductase, converting photonic excitation into a charge separation, which transfers an electron from the donor P700 chlorophyll pair to the spectroscopically characterized acceptors A0, A1, FX, FA and FB in turn. The sequence is that of Photosystem I iron-sulfur center from Chaetosphaeridium globosum (Charophycean green alga).